The chain runs to 311 residues: MSYQDLKKCKIITAFITPFHEDGSINFDAIPALIEHLLAHHTDGILLAGTTAESPTLTHDEELELFAAVQKVVNGRVPLIAGVGTNDTRDSIEFVKEVAEFGGFAAGLAIVPYYNKPSQEGMYQHFKTIADASDLPIIIYNIPGRVVVELTPETMLRLADHPNIIGVKECTSLANMAYLIEHKPEEFLIYTGEDGDAFHAMNLGADGVISVASHTNGDEMHEMFTAIAESDMKKAAAIQRKFIPKVNALFSYPSPAPVKAILNYMGFEAGPTRLPLVPAPEEDAKRIIKVVVDGDYEATKATVTGVLRPDY.

T51 contributes to the pyruvate binding site. Y140 (proton donor/acceptor) is an active-site residue. Residue K168 is the Schiff-base intermediate with substrate of the active site. Position 209 (I209) interacts with pyruvate.

Belongs to the DapA family. Homotetramer; dimer of dimers.

Its subcellular location is the cytoplasm. It carries out the reaction L-aspartate 4-semialdehyde + pyruvate = (2S,4S)-4-hydroxy-2,3,4,5-tetrahydrodipicolinate + H2O + H(+). It functions in the pathway amino-acid biosynthesis; L-lysine biosynthesis via DAP pathway; (S)-tetrahydrodipicolinate from L-aspartate: step 3/4. In terms of biological role, catalyzes the condensation of (S)-aspartate-beta-semialdehyde [(S)-ASA] and pyruvate to 4-hydroxy-tetrahydrodipicolinate (HTPA). The sequence is that of 4-hydroxy-tetrahydrodipicolinate synthase from Streptococcus pneumoniae (strain Hungary19A-6).